The chain runs to 433 residues: Protein RETICULATA-RELATED 1, chloroplastic (433 aa).

The N-terminal 63 residues, 1–63 (MSISLKISHI…LSSRNLRNRC (63 aa)), are a transit peptide targeting the chloroplast. Position 64 is an N-acetylvaline (valine 64). Residues 93 to 105 (DLEPELDDGDGGD) are compositionally biased toward acidic residues. Positions 93–143 (DLEPELDDGDGGDENGNNDGGGNGGNGDGGGGGGDGEGDDGEDEADKAEEK) are disordered. Residues 110-127 (NDGGGNGGNGDGGGGGGD) are compositionally biased toward gly residues. The span at 128 to 139 (GEGDDGEDEADK) shows a compositional bias: acidic residues. 2 helical membrane-spanning segments follow: residues 249-269 (LYAA…GLLA) and 323-343 (LLYG…ANLI).

Belongs to the RETICULATA family. Expressed in root vasculature, distal region of young leaf primordia, leaf bundle sheath cells, hydathodes and pollen grains.

The protein resides in the plastid. Its subcellular location is the chloroplast membrane. May play a role in leaf development. This Arabidopsis thaliana (Mouse-ear cress) protein is Protein RETICULATA-RELATED 1, chloroplastic.